The primary structure comprises 447 residues: MSSLRLDLAYATVESAISTMEDPIRQAHDLLHNRTGAGSEFTGWLQLPKTYDRAEFARIIDAADRIRASSDVLLVIGIGGSYLGARAAIDMLSHSFHNQLPRSRRPGCAVLFAGHNISSAYLSDLFDILDGKDVSVNVISKSGTTTEPAIAFRLIRRWMEKKYSPDEVRRRIFATTDRAKGALKRLADEQGYETFVVPDDVGGRFSVLTTVGLLPIAAAGIDITALLAGARDAMAEYANPSLATNACYRYAAARNLLYRQGKQVELFVAYEPSLQHLAEWWKQLYGESEGKEGKGIFPASVLFSTDLHSMGQYIQEGQRMLMETVVRFDKPRRELTIPPAEDDSDGLNFLAGKTVDFVNQKAFAGTLLAHVDGQVPNMIISVPEQNAYHLGQLFYFFEKACGVSGYLLGVNPFDQPGVESYKRNMFALLGKPGFEKEKAALEARLPR.

Glu287 (proton donor) is an active-site residue. Active-site residues include His308 and Lys422.

The protein belongs to the GPI family.

Its subcellular location is the cytoplasm. It carries out the reaction alpha-D-glucose 6-phosphate = beta-D-fructose 6-phosphate. It participates in carbohydrate biosynthesis; gluconeogenesis. It functions in the pathway carbohydrate degradation; glycolysis; D-glyceraldehyde 3-phosphate and glycerone phosphate from D-glucose: step 2/4. Catalyzes the reversible isomerization of glucose-6-phosphate to fructose-6-phosphate. This chain is Glucose-6-phosphate isomerase, found in Heliobacterium modesticaldum (strain ATCC 51547 / Ice1).